The chain runs to 299 residues: ATP phosphoribosyltransferase (299 aa).

Belongs to the ATP phosphoribosyltransferase family. Long subfamily. Mg(2+) is required as a cofactor.

The protein resides in the cytoplasm. It carries out the reaction 1-(5-phospho-beta-D-ribosyl)-ATP + diphosphate = 5-phospho-alpha-D-ribose 1-diphosphate + ATP. It functions in the pathway amino-acid biosynthesis; L-histidine biosynthesis; L-histidine from 5-phospho-alpha-D-ribose 1-diphosphate: step 1/9. Its activity is regulated as follows. Feedback inhibited by histidine. Its function is as follows. Catalyzes the condensation of ATP and 5-phosphoribose 1-diphosphate to form N'-(5'-phosphoribosyl)-ATP (PR-ATP). Has a crucial role in the pathway because the rate of histidine biosynthesis seems to be controlled primarily by regulation of HisG enzymatic activity. The protein is ATP phosphoribosyltransferase of Actinobacillus pleuropneumoniae serotype 5b (strain L20).